The sequence spans 70 residues: DNA gyrase inhibitor YacG (70 aa).

Zn(2+) is bound by residues cysteine 20, cysteine 23, cysteine 35, and cysteine 39.

This sequence belongs to the DNA gyrase inhibitor YacG family. Interacts with GyrB. Requires Zn(2+) as cofactor.

Inhibits all the catalytic activities of DNA gyrase by preventing its interaction with DNA. Acts by binding directly to the C-terminal domain of GyrB, which probably disrupts DNA binding by the gyrase. The protein is DNA gyrase inhibitor YacG of Rhizobium etli (strain ATCC 51251 / DSM 11541 / JCM 21823 / NBRC 15573 / CFN 42).